The following is a 411-amino-acid chain: Putative acid phosphatase 10 (411 aa).

His33 serves as the catalytic Nucleophile. Asp313 (proton donor) is an active-site residue. Cys379 and Cys385 are oxidised to a cystine.

It belongs to the histidine acid phosphatase family.

The catalysed reaction is a phosphate monoester + H2O = an alcohol + phosphate. The sequence is that of Putative acid phosphatase 10 (pho-10) from Caenorhabditis elegans.